The primary structure comprises 134 residues: D-ribose pyranase (134 aa).

H20 acts as the Proton donor in catalysis. Substrate is bound by residues D28, H101, and 123 to 125 (YSN).

This sequence belongs to the RbsD / FucU family. RbsD subfamily. In terms of assembly, homodecamer.

It localises to the cytoplasm. It carries out the reaction beta-D-ribopyranose = beta-D-ribofuranose. The protein operates within carbohydrate metabolism; D-ribose degradation; D-ribose 5-phosphate from beta-D-ribopyranose: step 1/2. Catalyzes the interconversion of beta-pyran and beta-furan forms of D-ribose. The chain is D-ribose pyranase from Pseudomonas entomophila (strain L48).